Here is a 437-residue protein sequence, read N- to C-terminus: Adenylosuccinate synthetase, organellar chromatophore (437 aa).

GTP-binding positions include Gly12 to Lys18 and Gly40 to Thr42. The active-site Proton acceptor is the Asp13. Residues Asp13 and Gly40 each coordinate Mg(2+). Residues Asp13 to Lys16, Asn38 to His41, Thr128, Arg142, Gln223, Thr238, and Arg302 contribute to the IMP site. His41 serves as the catalytic Proton donor. Thr298–Arg304 lines the substrate pocket. Residues Arg304 and Lys330–Asp332 contribute to the GTP site.

Belongs to the adenylosuccinate synthetase family. As to quaternary structure, homodimer. It depends on Mg(2+) as a cofactor.

The protein localises to the plastid. It is found in the organellar chromatophore. The catalysed reaction is IMP + L-aspartate + GTP = N(6)-(1,2-dicarboxyethyl)-AMP + GDP + phosphate + 2 H(+). It functions in the pathway purine metabolism; AMP biosynthesis via de novo pathway; AMP from IMP: step 1/2. Its function is as follows. Plays an important role in the de novo pathway and in the salvage pathway of purine nucleotide biosynthesis. Catalyzes the first committed step in the biosynthesis of AMP from IMP. This chain is Adenylosuccinate synthetase, organellar chromatophore, found in Paulinella chromatophora.